The sequence spans 263 residues: Small ribosomal subunit protein eS1 (263 aa).

Positions 236–254 are enriched in basic and acidic residues; the sequence is GDGKGGSDEPGARVDRPEG. The disordered stretch occupies residues 236–263; sequence GDGKGGSDEPGARVDRPEGYEPPVQETV.

Belongs to the eukaryotic ribosomal protein eS1 family. As to quaternary structure, component of the small ribosomal subunit. Mature ribosomes consist of a small (40S) and a large (60S) subunit. The 40S subunit contains about 33 different proteins and 1 molecule of RNA (18S). The 60S subunit contains about 49 different proteins and 3 molecules of RNA (28S, 5.8S and 5S).

It localises to the cytoplasm. This Periplaneta americana (American cockroach) protein is Small ribosomal subunit protein eS1.